We begin with the raw amino-acid sequence, 160 residues long: Phosphopantetheine adenylyltransferase (160 aa).

Ser10 contacts substrate. ATP contacts are provided by residues Ser10 to Phe11 and His18. 3 residues coordinate substrate: Lys42, Thr74, and Arg88. ATP contacts are provided by residues Gly89–Arg91, Glu99, and Tyr124–Thr130.

Belongs to the bacterial CoaD family. In terms of assembly, homohexamer. Mg(2+) serves as cofactor.

It localises to the cytoplasm. The catalysed reaction is (R)-4'-phosphopantetheine + ATP + H(+) = 3'-dephospho-CoA + diphosphate. The protein operates within cofactor biosynthesis; coenzyme A biosynthesis; CoA from (R)-pantothenate: step 4/5. Its function is as follows. Reversibly transfers an adenylyl group from ATP to 4'-phosphopantetheine, yielding dephospho-CoA (dPCoA) and pyrophosphate. The protein is Phosphopantetheine adenylyltransferase of Leptospira borgpetersenii serovar Hardjo-bovis (strain L550).